We begin with the raw amino-acid sequence, 262 residues long: Merozoite surface protein 2 (262 aa).

Residues 1 to 20 form the signal peptide; it reads MKVIKTLSIINFFIFVTFNI. Residues Asn-22 and Asn-36 are each glycosylated (N-linked (GlcNAc...) asparagine). Residues 44–188 form a polymorphic region region; sequence AESKPPTGTG…EQTESPELQS (145 aa). Residues 44-223 form a disordered region; that stretch reads AESKPPTGTG…DSQKECTDGN (180 aa). Over residues 51–66 the composition is skewed to gly residues; sequence GTGGSGSAGSGAGASA. Positions 67 to 111 are enriched in low complexity; that stretch reads GNGANPGADAERSPSTPATPATPATTTTTTTTNDAEASTSTSSEN. Residues 112-127 are compositionally biased toward basic and acidic residues; it reads PNHKNAETNPKGKGEV. 2 stretches are compositionally biased toward polar residues: residues 129 to 155 and 162 to 190; these read KPNQANKETQNNSNVQQDSQTKSNVPP and KSPTAQPEQAENSAPTAEQTESPELQSAP. N-linked (GlcNAc...) asparagine glycosylation occurs at Asn-139. Residue Asn-211 is glycosylated (N-linked (GlcNAc...) asparagine). An intrachain disulfide couples Cys-219 to Cys-227. Residues Asn-235 and Asn-236 are each glycosylated (N-linked (GlcNAc...) asparagine). Residue Asn-236 is the site of GPI-anchor amidated asparagine attachment. The propeptide at 237–262 is removed in mature form; that stretch reads SSNIASINKFVVLISATLVLSFAIFI.

It localises to the cell membrane. Its function is as follows. May play a role in the merozoite attachment to the erythrocyte. The protein is Merozoite surface protein 2 of Plasmodium falciparum (isolate Camp / Malaysia).